Here is a 215-residue protein sequence, read N- to C-terminus: Octanoyltransferase (215 aa).

Residues 33 to 209 (PDTPDQLWLV…QFARKLGYET (177 aa)) form the BPL/LPL catalytic domain. Substrate is bound by residues 72–79 (RGGQVTYH), 139–141 (SLG), and 152–154 (GLA). Cys-170 (acyl-thioester intermediate) is an active-site residue.

It belongs to the LipB family.

The protein resides in the cytoplasm. The catalysed reaction is octanoyl-[ACP] + L-lysyl-[protein] = N(6)-octanoyl-L-lysyl-[protein] + holo-[ACP] + H(+). The protein operates within protein modification; protein lipoylation via endogenous pathway; protein N(6)-(lipoyl)lysine from octanoyl-[acyl-carrier-protein]: step 1/2. Its function is as follows. Catalyzes the transfer of endogenously produced octanoic acid from octanoyl-acyl-carrier-protein onto the lipoyl domains of lipoate-dependent enzymes. Lipoyl-ACP can also act as a substrate although octanoyl-ACP is likely to be the physiological substrate. The chain is Octanoyltransferase from Cellvibrio japonicus (strain Ueda107) (Pseudomonas fluorescens subsp. cellulosa).